Reading from the N-terminus, the 519-residue chain is Alternative NAD(P)H-ubiquinone oxidoreductase C1, chloroplastic/mitochondrial (519 aa).

The N-terminal 52 residues, 1–52 (MAVLSSVSSLIPFSYGATRLTSKASLASRTSGFNLSSRWNSTRNSPMLYLSR), are a transit peptide targeting the chloroplast and mitochondrion. 82–118 (RVCILGGGFGGLYTALRLESLVWPEDKKPQVVLVDQS) is an FAD binding site. 246–282 (IKVAVVGCGYAGVELAATISERLQDRGIVQSINVSKN) provides a ligand contact to NAD(+).

Belongs to the NADH dehydrogenase family. FAD is required as a cofactor. Flowers, roots, leaves and stems.

It localises to the mitochondrion. It is found in the mitochondrion inner membrane. Its subcellular location is the plastid. The protein resides in the chloroplast. The protein localises to the plastoglobule. It catalyses the reaction a quinone + NADH + H(+) = a quinol + NAD(+). The catalysed reaction is a ubiquinone + NADH + H(+) = a ubiquinol + NAD(+). It carries out the reaction demethylphylloquinone + NADPH + H(+) = demethylphylloquinol + NADP(+). Its activity is regulated as follows. Inhibited by dicumarol. In terms of biological role, bifunctional oxidoreductase ables to act both on prenyl naphthoquinones and on prenyl benzoquinones. May serve a respiratory function. Involved in an electron flow toward the plastoglobule plastoquinone pool. Required for plastochromanol-8 accumulation and for phylloquinone (vitamin K1) production. Probably not directly involved in cyclic or chlororespiratory electron flows under standard growth conditions, but participates in the redox metabolism of plastoquinone-9 and the tocophrol recycling-intermediate alpha-tocopherol quinone. Catalyzes the penultimate step in the biosynthesis of vitamin K1. This is Alternative NAD(P)H-ubiquinone oxidoreductase C1, chloroplastic/mitochondrial from Arabidopsis thaliana (Mouse-ear cress).